Consider the following 193-residue polypeptide: Zinc finger protein AZF3 (193 aa).

2 C2H2-type zinc fingers span residues 75-97 and 118-140; these read YKCG…KASH and HVCS…KRCH.

As to expression, expressed in roots.

Its subcellular location is the nucleus. In terms of biological role, transcriptional repressor probably involved in abiotic stress responses. Binds DNA in a sequence-specific manner and can repress the transactivation activity of other transcription factors. This is Zinc finger protein AZF3 (AZF3) from Arabidopsis thaliana (Mouse-ear cress).